Here is a 1183-residue protein sequence, read N- to C-terminus: DNA-directed RNA polymerase subunit beta (1183 aa).

The span at D1149–A1162 shows a compositional bias: acidic residues. Residues D1149 to D1183 are disordered. The span at T1163–D1183 shows a compositional bias: basic and acidic residues.

Belongs to the RNA polymerase beta chain family. In terms of assembly, the RNAP catalytic core consists of 2 alpha, 1 beta, 1 beta' and 1 omega subunit. When a sigma factor is associated with the core the holoenzyme is formed, which can initiate transcription.

It carries out the reaction RNA(n) + a ribonucleoside 5'-triphosphate = RNA(n+1) + diphosphate. Functionally, DNA-dependent RNA polymerase catalyzes the transcription of DNA into RNA using the four ribonucleoside triphosphates as substrates. The chain is DNA-directed RNA polymerase subunit beta from Staphylococcus haemolyticus (strain JCSC1435).